We begin with the raw amino-acid sequence, 485 residues long: Glutamyl-tRNA(Gln) amidotransferase subunit A (485 aa).

Residues Lys74 and Ser149 each act as charge relay system in the active site. The active-site Acyl-ester intermediate is the Ser173.

The protein belongs to the amidase family. GatA subfamily. Heterotrimer of A, B and C subunits.

It carries out the reaction L-glutamyl-tRNA(Gln) + L-glutamine + ATP + H2O = L-glutaminyl-tRNA(Gln) + L-glutamate + ADP + phosphate + H(+). Its function is as follows. Allows the formation of correctly charged Gln-tRNA(Gln) through the transamidation of misacylated Glu-tRNA(Gln) in organisms which lack glutaminyl-tRNA synthetase. The reaction takes place in the presence of glutamine and ATP through an activated gamma-phospho-Glu-tRNA(Gln). The sequence is that of Glutamyl-tRNA(Gln) amidotransferase subunit A from Synechococcus sp. (strain RCC307).